An 819-amino-acid chain; its full sequence is Myosin light chain kinase 3 (819 aa).

3 disordered regions span residues 146–256 (VPWR…TPSE), 273–334 (VVSP…TPPR), and 347–462 (EMLM…EQDC). Serine 152 is subject to Phosphoserine. 2 stretches are compositionally biased toward basic and acidic residues: residues 158–170 (EENKERVEEEGGK) and 183–196 (DAREPGEESQKADV). Pro residues predominate over residues 307 to 318 (GPGPQCPGPPGL). Phosphoserine occurs at positions 355, 401, and 408. The 256-residue stretch at 515-770 (VCQHEVLGGG…ATQCLKHEWL (256 aa)) folds into the Protein kinase domain. ATP contacts are provided by residues 521-529 (LGGGRFGQV) and lysine 544. Residue aspartate 636 is the Proton acceptor of the active site.

This sequence belongs to the protein kinase superfamily. CAMK Ser/Thr protein kinase family. It depends on Mg(2+) as a cofactor. In terms of processing, phosphorylated on serine residues. In terms of tissue distribution, restricted to heart.

The protein resides in the cytoplasm. It carries out the reaction L-seryl-[myosin light chain] + ATP = O-phospho-L-seryl-[myosin light chain] + ADP + H(+). It catalyses the reaction L-threonyl-[myosin light chain] + ATP = O-phospho-L-threonyl-[myosin light chain] + ADP + H(+). Its function is as follows. Kinase that phosphorylates MYL2 in vitro. Promotes sarcomere formation in cardiomyocytes and increases cardiomyocyte contractility. This Homo sapiens (Human) protein is Myosin light chain kinase 3 (MYLK3).